A 119-amino-acid chain; its full sequence is V-type proton ATPase subunit F (119 aa).

Belongs to the V-ATPase F subunit family. In terms of assembly, V-ATPase is a heteromultimeric enzyme made up of two complexes: the ATP-hydrolytic V1 complex and the proton translocation V0 complex. The V1 complex consists of three catalytic AB heterodimers that form a heterohexamer, three peripheral stalks each consisting of EG heterodimers, one central rotor including subunits D and F, and the regulatory subunits C and H. The proton translocation complex V0 consists of the proton transport subunit a, a ring of proteolipid subunits c9c'', rotary subunit d, subunits e and f, and the accessory subunits ATP6AP1/Ac45 and ATP6AP2/PRR.

It is found in the cytoplasmic vesicle. Its subcellular location is the secretory vesicle. The protein localises to the synaptic vesicle membrane. It localises to the clathrin-coated vesicle membrane. Functionally, subunit of the V1 complex of vacuolar(H+)-ATPase (V-ATPase), a multisubunit enzyme composed of a peripheral complex (V1) that hydrolyzes ATP and a membrane integral complex (V0) that translocates protons. V-ATPase is responsible for acidifying and maintaining the pH of intracellular compartments and in some cell types, is targeted to the plasma membrane, where it is responsible for acidifying the extracellular environment. This Homo sapiens (Human) protein is V-type proton ATPase subunit F (ATP6V1F).